The primary structure comprises 192 residues: UPF0312 protein PFLU_5725 (192 aa).

Residues 1 to 23 (MLKKTLAALAIGTALLSAGQVMA) form the signal peptide.

The protein belongs to the UPF0312 family. Type 1 subfamily.

Its subcellular location is the periplasm. The chain is UPF0312 protein PFLU_5725 from Pseudomonas fluorescens (strain SBW25).